Here is a 538-residue protein sequence, read N- to C-terminus: Tryptophan 7-halogenase PrnA (538 aa).

FAD contacts are provided by Gly-13, Thr-15, Ala-16, Ser-39, Ile-42, Ile-45, Glu-49, and Ala-50. Residue Lys-79 is part of the active site. Position 79 (Lys-79) interacts with 7-chloro-L-tryptophan. The FAD site is built by Val-187 and Leu-337. Position 346 (Glu-346) interacts with 7-chloro-L-tryptophan. L-tryptophan is bound at residue Glu-346. Chloride is bound by residues Thr-348 and Gly-349. An FAD-binding site is contributed by Ile-350. Tyr-443, Tyr-444, Glu-450, and Phe-454 together coordinate 7-chloro-L-tryptophan. L-tryptophan is bound by residues Tyr-443, Tyr-444, Glu-450, and Phe-454.

This sequence belongs to the flavin-dependent halogenase family. Bacterial tryptophan halogenase subfamily. In terms of assembly, homodimer.

It catalyses the reaction L-tryptophan + FADH2 + chloride + O2 = 7-chloro-L-tryptophan + FAD + 2 H2O. It participates in antibiotic biosynthesis. Functionally, involved in the biosynthesis of the antifungal antibiotic pyrrolnitrin. Catalyzes the chlorination of tryptophan (Trp) at C7 position to yield 7-chloro-L-tryptophan (7-CLT). The polypeptide is Tryptophan 7-halogenase PrnA (Pseudomonas fluorescens).